The primary structure comprises 756 residues: MIRNTLAFLAILFLLIPTALLIIGSVSVPSTRMTLAKVEGTEFGIFGTCTGNGTDCTETSFGYNASSSLIDDFYYKGDKRLVLSKVLITHIISAFLSFLSAIFVFFSIFLVNQAVNIINIIVVFITTLLTCLAFAIELVLFLPHNTWQSYVTAGAIGSDLIAILALCLRSVSISRIGQKSARLEHVDTMNSSYSSYKTDVKYPLALDDKLSSVPTLPKFHDALTSTSEFGPPSDSGDTVGTTQYPGDIKYATGYESTVASPVPSRVAKLSSRDTPSIIADYDEFRKSESSPSRSSVLSTSKPEVHETEGYCPHKTGNRPGFPSLNIPRTRPTTAGIANTQFDLEPYRNRQAGSISSEGTDSRFFDVENQVSVAQTPSVKPEMFPKTARPFAAIHANASSTQLRNTENITHPGIPNHFAKTTSSVFDEPPATRMPQTRSPVNDHSSFPSDLPIKGEMSTNMTGAPRVGSRNNSSNDLHAQAGMLKNVGNGPRNAPRNNSSNNLHAQGGMPMNMRGPRGAPRNNSSGDLHIQSGMPMNGRNGPRDTSRNNSSSDLYAQSGMHPNMNNGHRGAPRNNSSNDLHAHGGMPVNMRGPRNTSRNNSSSEFNAQIPMNLRNGPRNASRSNSSTDLFGQSGIPGNSRGMPTSPNSRNNSALDLSMHGIPLANNSRQFKRPSYGNMSRPSFELNGSRNPSHGSLNTAHAGMGYGPRSMMRDPQNLSNVPPVSNTLDQLSGNADFELPVRGNRNNRRGPGGNRMIR.

A signal peptide spans 1 to 24 (MIRNTLAFLAILFLLIPTALLIIG). N-linked (GlcNAc...) asparagine glycans are attached at residues N52 and N64. 3 helical membrane passes run 91 to 111 (IISAFLSFLSAIFVFFSIFLV), 120 to 140 (IIVVFITTLLTCLAFAIELVL), and 148 to 168 (QSYVTAGAIGSDLIAILALCL). Residue N190 is glycosylated (N-linked (GlcNAc...) asparagine). The disordered stretch occupies residues 281 to 328 (YDEFRKSESSPSRSSVLSTSKPEVHETEGYCPHKTGNRPGFPSLNIPR). Residues 289–300 (SSPSRSSVLSTS) are compositionally biased toward low complexity. 2 N-linked (GlcNAc...) asparagine glycosylation sites follow: N396 and N407. A disordered region spans residues 427–453 (EPPATRMPQTRSPVNDHSSFPSDLPIK). Residues 433–447 (MPQTRSPVNDHSSFP) are compositionally biased toward polar residues. Position 438 is a phosphoserine (S438). Residues N459, N470, N471, N496, N497, N521, N522, N547, N548, N573, N574, N594, N598, N599, N618, N623, N649, N664, N676, and N685 are each glycosylated (N-linked (GlcNAc...) asparagine). Residues 482 to 650 (MLKNVGNGPR…MPTSPNSRNN (169 aa)) are disordered. A compositionally biased stretch (low complexity) spans 485-520 (NVGNGPRNAPRNNSSNNLHAQGGMPMNMRGPRGAPR). Polar residues-rich tracts occupy residues 593-605 (RNTSRNNSSSEFN), 617-629 (RNASRSNSSTDLF), and 640-650 (GMPTSPNSRNN). The span at 686–697 (GSRNPSHGSLNT) shows a compositional bias: polar residues. The interval 686–713 (GSRNPSHGSLNTAHAGMGYGPRSMMRDP) is disordered. The N-linked (GlcNAc...) asparagine glycan is linked to N715. The tract at residues 735-756 (FELPVRGNRNNRRGPGGNRMIR) is disordered.

To yeast YOL019W and YMR063W.

It is found in the cell membrane. The protein localises to the cell tip. Its function is as follows. Required for correct cell separation at high temperatures. The sequence is that of Membrane-anchored protein 1 (mac1) from Schizosaccharomyces pombe (strain 972 / ATCC 24843) (Fission yeast).